Consider the following 64-residue polypeptide: Large ribosomal subunit protein bL35 (64 aa).

The protein belongs to the bacterial ribosomal protein bL35 family.

The polypeptide is Large ribosomal subunit protein bL35 (Shewanella oneidensis (strain ATCC 700550 / JCM 31522 / CIP 106686 / LMG 19005 / NCIMB 14063 / MR-1)).